The following is a 91-amino-acid chain: UPF0358 protein SAS1047 (91 aa).

Belongs to the UPF0358 family.

In Staphylococcus aureus (strain MSSA476), this protein is UPF0358 protein SAS1047.